The primary structure comprises 525 residues: GMP synthase [glutamine-hydrolyzing] (525 aa).

One can recognise a Glutamine amidotransferase type-1 domain in the interval 9–207 (RILILDFGSQ…VRDICQCEAL (199 aa)). The Nucleophile role is filled by cysteine 86. Active-site residues include histidine 181 and glutamate 183. The GMPS ATP-PPase domain maps to 208–400 (WTPAKIIDDA…LGLPYDMLYR (193 aa)). Residue 235–241 (SGGVDSS) coordinates ATP.

In terms of assembly, homodimer.

It catalyses the reaction XMP + L-glutamine + ATP + H2O = GMP + L-glutamate + AMP + diphosphate + 2 H(+). It participates in purine metabolism; GMP biosynthesis; GMP from XMP (L-Gln route): step 1/1. Functionally, catalyzes the synthesis of GMP from XMP. This Enterobacter sp. (strain 638) protein is GMP synthase [glutamine-hydrolyzing].